A 247-amino-acid polypeptide reads, in one-letter code: tRNA pseudouridine synthase A (247 aa).

The active-site Nucleophile is aspartate 52. A substrate-binding site is contributed by tyrosine 110.

Belongs to the tRNA pseudouridine synthase TruA family. In terms of assembly, homodimer.

It carries out the reaction uridine(38/39/40) in tRNA = pseudouridine(38/39/40) in tRNA. Functionally, formation of pseudouridine at positions 38, 39 and 40 in the anticodon stem and loop of transfer RNAs. The protein is tRNA pseudouridine synthase A of Hyphomonas neptunium (strain ATCC 15444).